We begin with the raw amino-acid sequence, 464 residues long: L-2-hydroxyglutarate dehydrogenase, mitochondrial (464 aa).

A mitochondrion-targeting transit peptide spans methionine 1–isoleucine 52. 2 positions are modified to N6-acetyllysine: lysine 105 and lysine 174.

The protein belongs to the L2HGDH family. FAD is required as a cofactor.

Its subcellular location is the mitochondrion. The catalysed reaction is (S)-2-hydroxyglutarate + A = 2-oxoglutarate + AH2. The chain is L-2-hydroxyglutarate dehydrogenase, mitochondrial (L2hgdh) from Mus musculus (Mouse).